Here is a 468-residue protein sequence, read N- to C-terminus: ATP synthase subunit beta (468 aa).

Position 155–162 (155–162) interacts with ATP; sequence GGAGVGKT.

It belongs to the ATPase alpha/beta chains family. In terms of assembly, F-type ATPases have 2 components, CF(1) - the catalytic core - and CF(0) - the membrane proton channel. CF(1) has five subunits: alpha(3), beta(3), gamma(1), delta(1), epsilon(1). CF(0) has three main subunits: a(1), b(2) and c(9-12). The alpha and beta chains form an alternating ring which encloses part of the gamma chain. CF(1) is attached to CF(0) by a central stalk formed by the gamma and epsilon chains, while a peripheral stalk is formed by the delta and b chains.

Its subcellular location is the cell inner membrane. The enzyme catalyses ATP + H2O + 4 H(+)(in) = ADP + phosphate + 5 H(+)(out). Produces ATP from ADP in the presence of a proton gradient across the membrane. The catalytic sites are hosted primarily by the beta subunits. The polypeptide is ATP synthase subunit beta (Thermotoga neapolitana (strain ATCC 49049 / DSM 4359 / NBRC 107923 / NS-E)).